Consider the following 81-residue polypeptide: Large ribosomal subunit protein uL29c (81 aa).

The protein belongs to the universal ribosomal protein uL29 family.

Its subcellular location is the plastid. It localises to the chloroplast. The chain is Large ribosomal subunit protein uL29c from Phaeodactylum tricornutum (strain CCAP 1055/1).